The following is a 328-amino-acid chain: P2Y purinoceptor 6 (328 aa).

Topologically, residues 1 to 27 (MEWDNGTGQALGLPPTTCVYRENFKQL) are extracellular. The N-linked (GlcNAc...) asparagine glycan is linked to N5. Residues 28 to 48 (LLPPVYSAVLAAGLPLNICVI) form a helical membrane-spanning segment. At 49 to 62 (TQICTSRRALTRTA) the chain is on the cytoplasmic side. A helical transmembrane segment spans residues 63–83 (VYTLNLALADLLYACSLPLLI). At 84–101 (YNYAQGDHWPFGDFACRL) the chain is on the extracellular side. A disulfide bridge connects residues C99 and C177. Residues 102 to 122 (VRFLFYANLHGSILFLTCISF) form a helical membrane-spanning segment. Residues 123–144 (QRYLGICHPLAPWHKRGGRRAA) are Cytoplasmic-facing. A helical membrane pass occupies residues 145 to 165 (WLVCVAVWLAVTTQCLPTAIF). Residues 166 to 194 (AATGIQRNRTVCYDLSPPALATHYMPYGM) lie on the Extracellular side of the membrane. The helical transmembrane segment at 195-215 (ALTVIGFLLPFAALLACYCLL) threads the bilayer. Residues 216–236 (ACRLCRQDGPAEPVAQERRGK) are Cytoplasmic-facing. Residues 237-257 (AARMAVVVAAAFAISFLPFHI) traverse the membrane as a helical segment. Over 258–280 (TKTAYLAVRSTPGVPCTVLEAFA) the chain is Extracellular. The chain crosses the membrane as a helical span at residues 281 to 303 (AAYKGTRPFASANSVLDPILFYF). The Cytoplasmic portion of the chain corresponds to 304–328 (TQKKFRRRPHELLQKLTAKWQRQGR).

Belongs to the G-protein coupled receptor 1 family.

It localises to the cell membrane. Receptor for extracellular UDP &gt; UTP &gt; ATP. The activity of this receptor is mediated by G proteins which activate a phosphatidylinositol-calcium second messenger system. The chain is P2Y purinoceptor 6 (P2RY6) from Homo sapiens (Human).